The primary structure comprises 337 residues: MRVLGIETSCDETGIAIYDDEKGLLANQLYSQVKLHADYGGVVPELASRDHVRKTVPLIQAALKESGLTAKDIDAVAYTAGPGLVGALLVGATVGRSLAFAWDVPAIPVHHMEGHLLAPMLEDNPPEFPFVALLVSGGHTQLISVTGIGQYELLGESIDDAAGEAFDKTAKLLGLDYPGGPLLSKMAAQGTAGRFVFPRPMTDRPGLDFSFSGLKTFAANTIRDNGTDDQTRADIARAFEDAVVDTLMIKCKRALDQTGFKRLVMAGGVSANRTLRAKLAEMMKKRRGEVFYARPEFCTDNGAMIAYAGMVRFKAGATADLGVSVRPRWPLAELPAA.

Fe cation is bound by residues histidine 111 and histidine 115. Residues 134–138 (LVSGG), aspartate 167, glycine 180, and asparagine 272 contribute to the substrate site. Residue aspartate 300 coordinates Fe cation.

This sequence belongs to the KAE1 / TsaD family. Fe(2+) serves as cofactor.

It localises to the cytoplasm. The enzyme catalyses L-threonylcarbamoyladenylate + adenosine(37) in tRNA = N(6)-L-threonylcarbamoyladenosine(37) in tRNA + AMP + H(+). In terms of biological role, required for the formation of a threonylcarbamoyl group on adenosine at position 37 (t(6)A37) in tRNAs that read codons beginning with adenine. Is involved in the transfer of the threonylcarbamoyl moiety of threonylcarbamoyl-AMP (TC-AMP) to the N6 group of A37, together with TsaE and TsaB. TsaD likely plays a direct catalytic role in this reaction. The chain is tRNA N6-adenosine threonylcarbamoyltransferase from Escherichia coli (strain K12 / MC4100 / BW2952).